The chain runs to 687 residues: Probable ATP-dependent RNA helicase Dbp73D (687 aa).

2 disordered regions span residues Met1–Glu26 and Thr52–Val87. Basic and acidic residues-rich tracts occupy residues Tyr9 to Asp18 and Ile54 to Leu79. Positions Leu160–Ile168 match the Q motif motif. Positions Lys177–Phe381 constitute a Helicase ATP-binding domain. An ATP-binding site is contributed by Ala190–Thr197. The DEAD box motif lies at Asp305–Asp308. The Helicase C-terminal domain occupies Thr434–Ile583. Residues Ile646–Lys675 are disordered. Positions Lys652–Lys675 are enriched in basic and acidic residues.

The protein belongs to the DEAD box helicase family. DDX51/DBP6 subfamily. Expressed in the germline tissue of the ovary.

Its subcellular location is the nucleus. The protein resides in the nucleolus. The enzyme catalyses ATP + H2O = ADP + phosphate + H(+). Its function is as follows. ATP-binding RNA helicase involved in the biogenesis of 60S ribosomal subunits. This Drosophila melanogaster (Fruit fly) protein is Probable ATP-dependent RNA helicase Dbp73D (Dbp73D).